We begin with the raw amino-acid sequence, 361 residues long: Phospho-N-acetylmuramoyl-pentapeptide-transferase (361 aa).

10 consecutive transmembrane segments (helical) span residues 27 to 47 (GAIV…ISTL), 72 to 92 (TPTM…LLWA), 94 to 114 (LSNL…LIGF), 133 to 153 (ARLA…INAG), 169 to 189 (LLLD…VAAG), 200 to 220 (GLAI…SYLS), 237 to 257 (VGEL…FLWF), 264 to 284 (IFMG…IAVA), 289 to 309 (IVLA…IVQV), and 338 to 358 (QVVI…LATL).

The protein belongs to the glycosyltransferase 4 family. MraY subfamily. Mg(2+) is required as a cofactor.

The protein localises to the cell inner membrane. It catalyses the reaction UDP-N-acetyl-alpha-D-muramoyl-L-alanyl-gamma-D-glutamyl-meso-2,6-diaminopimeloyl-D-alanyl-D-alanine + di-trans,octa-cis-undecaprenyl phosphate = di-trans,octa-cis-undecaprenyl diphospho-N-acetyl-alpha-D-muramoyl-L-alanyl-D-glutamyl-meso-2,6-diaminopimeloyl-D-alanyl-D-alanine + UMP. Its pathway is cell wall biogenesis; peptidoglycan biosynthesis. Catalyzes the initial step of the lipid cycle reactions in the biosynthesis of the cell wall peptidoglycan: transfers peptidoglycan precursor phospho-MurNAc-pentapeptide from UDP-MurNAc-pentapeptide onto the lipid carrier undecaprenyl phosphate, yielding undecaprenyl-pyrophosphoryl-MurNAc-pentapeptide, known as lipid I. The protein is Phospho-N-acetylmuramoyl-pentapeptide-transferase of Azorhizobium caulinodans (strain ATCC 43989 / DSM 5975 / JCM 20966 / LMG 6465 / NBRC 14845 / NCIMB 13405 / ORS 571).